The sequence spans 171 residues: Transcription antitermination protein NusB (171 aa).

The protein belongs to the NusB family.

Its function is as follows. Involved in transcription antitermination. Required for transcription of ribosomal RNA (rRNA) genes. Binds specifically to the boxA antiterminator sequence of the ribosomal RNA (rrn) operons. The chain is Transcription antitermination protein NusB from Brucella ovis (strain ATCC 25840 / 63/290 / NCTC 10512).